The primary structure comprises 446 residues: Glutamyl-tRNA reductase (446 aa).

Substrate contacts are provided by residues 49 to 52, Ser109, 114 to 116, and Gln120; these read TCNR and ETQ. Cys50 acts as the Nucleophile in catalysis. Residue 189–194 participates in NADP(+) binding; the sequence is GAGETG.

Belongs to the glutamyl-tRNA reductase family. In terms of assembly, homodimer.

The catalysed reaction is (S)-4-amino-5-oxopentanoate + tRNA(Glu) + NADP(+) = L-glutamyl-tRNA(Glu) + NADPH + H(+). It functions in the pathway porphyrin-containing compound metabolism; protoporphyrin-IX biosynthesis; 5-aminolevulinate from L-glutamyl-tRNA(Glu): step 1/2. Its function is as follows. Catalyzes the NADPH-dependent reduction of glutamyl-tRNA(Glu) to glutamate 1-semialdehyde (GSA). This Exiguobacterium sibiricum (strain DSM 17290 / CCUG 55495 / CIP 109462 / JCM 13490 / 255-15) protein is Glutamyl-tRNA reductase.